Reading from the N-terminus, the 329-residue chain is MENLTCASSVEQDRFASLNFIISQSVDLITSFFTYMLSIIAIKMVLKQSIFETSTKILLFLNIFYANLYQIVYSIDVVVILYKHFFMQEEVCSLLILESSCAPFLETLIGTSSGMMYCQTGLLIERFCATFLKTYNGKKTIFVGSFIAIVVMISTTSTGKLVIWDDPLDDAVLACFIFPKKSKARSTIHFYISTVVSLFNLAASVALNKYNKTLEYQVRFKICARFHKRQVIESTETICFLNFTQFVFMFIYSSGNSTLKSIRDYIQPETYNFWVVWCYTVPFIALTFPLLLIYKVKSTRGIRAQKIVQISNTKQTQDEHINQMKVMWE.

Helical transmembrane passes span 26–46, 60–80, 141–161, 187–207, 231–251, and 273–293; these read VDLI…KMVL, FLNI…VVVI, IFVG…TGKL, TIHF…SVAL, VIES…FMFI, and FWVV…LLLI.

The protein belongs to the nematode receptor-like protein sra family.

The protein resides in the membrane. This Caenorhabditis elegans protein is Serpentine receptor class alpha-8 (sra-8).